The following is a 221-amino-acid chain: ATP phosphoribosyltransferase (221 aa).

It belongs to the ATP phosphoribosyltransferase family. Short subfamily. Heteromultimer composed of HisG and HisZ subunits.

Its subcellular location is the cytoplasm. It catalyses the reaction 1-(5-phospho-beta-D-ribosyl)-ATP + diphosphate = 5-phospho-alpha-D-ribose 1-diphosphate + ATP. It participates in amino-acid biosynthesis; L-histidine biosynthesis; L-histidine from 5-phospho-alpha-D-ribose 1-diphosphate: step 1/9. Its function is as follows. Catalyzes the condensation of ATP and 5-phosphoribose 1-diphosphate to form N'-(5'-phosphoribosyl)-ATP (PR-ATP). Has a crucial role in the pathway because the rate of histidine biosynthesis seems to be controlled primarily by regulation of HisG enzymatic activity. The chain is ATP phosphoribosyltransferase from Rhizorhabdus wittichii (strain DSM 6014 / CCUG 31198 / JCM 15750 / NBRC 105917 / EY 4224 / RW1) (Sphingomonas wittichii).